The primary structure comprises 466 residues: 3-isopropylmalate dehydratase large subunit (466 aa).

3 residues coordinate [4Fe-4S] cluster: C346, C406, and C409.

It belongs to the aconitase/IPM isomerase family. LeuC type 1 subfamily. Heterodimer of LeuC and LeuD. [4Fe-4S] cluster serves as cofactor.

It carries out the reaction (2R,3S)-3-isopropylmalate = (2S)-2-isopropylmalate. It functions in the pathway amino-acid biosynthesis; L-leucine biosynthesis; L-leucine from 3-methyl-2-oxobutanoate: step 2/4. Its function is as follows. Catalyzes the isomerization between 2-isopropylmalate and 3-isopropylmalate, via the formation of 2-isopropylmaleate. The protein is 3-isopropylmalate dehydratase large subunit of Alteromonas mediterranea (strain DSM 17117 / CIP 110805 / LMG 28347 / Deep ecotype).